Reading from the N-terminus, the 122-residue chain is MVQRLTYRRRLSYRTTSNATKIVKTPGGRLVYQYIGKTGKVPRCGECGVNLAGIPALRPYQYKNLPKSRRTVSRAYGGSKCAKCVRNRIVRAFLIEEQKTAKIVFKKQQKDLKQKKDKKSSK.

Belongs to the eukaryotic ribosomal protein eL34 family.

The polypeptide is Large ribosomal subunit protein eL34 (rpl34) (Dictyostelium discoideum (Social amoeba)).